We begin with the raw amino-acid sequence, 418 residues long: Histidinol dehydrogenase (418 aa).

Residues Tyr-119, Gln-180, and Asn-203 each contribute to the NAD(+) site. Substrate is bound by residues Thr-226, Gln-248, and His-251. Residues Gln-248 and His-251 each coordinate Zn(2+). Active-site proton acceptor residues include Glu-316 and His-317. Residues His-317, Asp-350, Glu-404, and His-409 each contribute to the substrate site. Asp-350 provides a ligand contact to Zn(2+). His-409 contributes to the Zn(2+) binding site.

This sequence belongs to the histidinol dehydrogenase family. Requires Zn(2+) as cofactor.

It catalyses the reaction L-histidinol + 2 NAD(+) + H2O = L-histidine + 2 NADH + 3 H(+). The protein operates within amino-acid biosynthesis; L-histidine biosynthesis; L-histidine from 5-phospho-alpha-D-ribose 1-diphosphate: step 9/9. In terms of biological role, catalyzes the sequential NAD-dependent oxidations of L-histidinol to L-histidinaldehyde and then to L-histidine. The polypeptide is Histidinol dehydrogenase (Staphylococcus aureus (strain COL)).